A 362-amino-acid polypeptide reads, in one-letter code: Protein MGF 360-18R (362 aa).

It belongs to the asfivirus MGF 360 family.

Its function is as follows. Plays a role in virus cell tropism, and may be required for efficient virus replication in macrophages. The chain is Protein MGF 360-18R from African swine fever virus (isolate Warthog/Namibia/Wart80/1980) (ASFV).